We begin with the raw amino-acid sequence, 115 residues long: MARIAGVDLPRNKRVVVALTYIYGIGEPTAKKICKDAGISEDIRTNDLTPEDQEKLRSEVDKYRVEGDLRREVSLNIKRLVEIGSYRGIRHRRGLPVRGQNTKNNARTRKGSKRK.

The segment at 92 to 115 (RRGLPVRGQNTKNNARTRKGSKRK) is disordered. Positions 106–115 (ARTRKGSKRK) are enriched in basic residues.

Belongs to the universal ribosomal protein uS13 family. As to quaternary structure, part of the 30S ribosomal subunit. Forms a loose heterodimer with protein S19. Forms two bridges to the 50S subunit in the 70S ribosome.

In terms of biological role, located at the top of the head of the 30S subunit, it contacts several helices of the 16S rRNA. In the 70S ribosome it contacts the 23S rRNA (bridge B1a) and protein L5 of the 50S subunit (bridge B1b), connecting the 2 subunits; these bridges are implicated in subunit movement. Contacts the tRNAs in the A and P-sites. The polypeptide is Small ribosomal subunit protein uS13 (Lactobacillus gasseri (strain ATCC 33323 / DSM 20243 / BCRC 14619 / CIP 102991 / JCM 1131 / KCTC 3163 / NCIMB 11718 / NCTC 13722 / AM63)).